Reading from the N-terminus, the 147-residue chain is Large ribosomal subunit protein uL15 (147 aa).

Residues 1-13 (MELHSLKAAEGSR) show a composition bias toward basic and acidic residues. Positions 1 to 57 (MELHSLKAAEGSRKVRNRVGRGTSSGNGKTSGRGQKGQKSRSGGGVRPGFEGGQTEL) are disordered. 2 stretches are compositionally biased toward gly residues: residues 23 to 35 (TSSG…GRGQ) and 42 to 52 (SGGGVRPGFEG).

It belongs to the universal ribosomal protein uL15 family. Part of the 50S ribosomal subunit.

In terms of biological role, binds to the 23S rRNA. The chain is Large ribosomal subunit protein uL15 from Lactococcus lactis subsp. cremoris (strain MG1363).